A 174-amino-acid polypeptide reads, in one-letter code: Probable NAD(P)H dehydrogenase subunit CRR3, chloroplastic (174 aa).

Residues 1 to 54 (MAVLSTIYSITRASTPTMASLTNDSPSPLPSSSPSKLPSPTSPSKKPLKLRQVS) constitute a chloroplast transit peptide. A compositionally biased stretch (polar residues) spans 14 to 24 (STPTMASLTND). The tract at residues 14–71 (STPTMASLTNDSPSPLPSSSPSKLPSPTSPSKKPLKLRQVSKQMGSQNQQRRGNKPSI) is disordered. Positions 30–45 (PSSSPSKLPSPTSPSK) are enriched in low complexity. The segment covering 53 to 64 (VSKQMGSQNQQR) has biased composition (polar residues). A helical transmembrane segment spans residues 140 to 160 (FTIQWILPIWIMSLLVACGVI).

The protein localises to the plastid. It is found in the chloroplast thylakoid membrane. In terms of biological role, probable subunit of the chloroplast NAD(P)H dehydrogenase (NDH) complex of the photosynthetic electron transport chain. Required for both formation and activity of NDH. May function in assembly or stabilization of the NDH complex. This Arabidopsis thaliana (Mouse-ear cress) protein is Probable NAD(P)H dehydrogenase subunit CRR3, chloroplastic.